We begin with the raw amino-acid sequence, 216 residues long: Probable transaldolase (216 aa).

The active-site Schiff-base intermediate with substrate is Lys83.

This sequence belongs to the transaldolase family. Type 3B subfamily.

The protein resides in the cytoplasm. It carries out the reaction D-sedoheptulose 7-phosphate + D-glyceraldehyde 3-phosphate = D-erythrose 4-phosphate + beta-D-fructose 6-phosphate. It participates in carbohydrate degradation; pentose phosphate pathway; D-glyceraldehyde 3-phosphate and beta-D-fructose 6-phosphate from D-ribose 5-phosphate and D-xylulose 5-phosphate (non-oxidative stage): step 2/3. Functionally, transaldolase is important for the balance of metabolites in the pentose-phosphate pathway. The sequence is that of Probable transaldolase from Shouchella clausii (strain KSM-K16) (Alkalihalobacillus clausii).